We begin with the raw amino-acid sequence, 1365 residues long: Nuclear pore complex protein Nup154 (1365 aa).

A required for binding to Nup93-1 and anchoring to the nuclear pore complex region spans residues 1–508; that stretch reads MTLPQAQLDF…GTHIIEVLKM (508 aa). Positions 508-986 are required for binding to chromatin; the sequence is MVDVLRQILL…KSINPLKGTA (479 aa).

Belongs to the non-repetitive/WGA-negative nucleoporin family. In terms of assembly, interacts (via N-terminus) with Nup93-1. Interacts with Nup35. Interacts with cup.

Its subcellular location is the nucleus. The protein localises to the nuclear pore complex. It is found in the chromosome. The protein resides in the nucleus membrane. It localises to the cytoplasm. Functionally, component of the nuclear pore complex. Has a role in the organization of the inner nuclear membrane proteins at the nuclear envelope. In germ cells, plays a role in the nuclear localization of components of the dpp signaling pathways, such as Medea and phosphorylated Mad. Binds to chromatin, and together with Nup62 and Nup93-1, contributes to karyosome morphology and chromatin organization including attachment to the nuclear envelope in oocytes and nurse cells. Has a role in female fertility including egg chamber development; in nurse cells, has a role in the organization of F-actin in subcortical and cytoplasmic actin filaments important for the transfer of cytoplasm from nurse cells to the growing oocytes. Has a role in male spermatogenesis and fertility. Has a role in germ line cell proliferation. The chain is Nuclear pore complex protein Nup154 from Drosophila melanogaster (Fruit fly).